The following is a 272-amino-acid chain: Bis(5'-nucleosyl)-tetraphosphatase, symmetrical (272 aa).

This sequence belongs to the Ap4A hydrolase family.

It carries out the reaction P(1),P(4)-bis(5'-adenosyl) tetraphosphate + H2O = 2 ADP + 2 H(+). Hydrolyzes diadenosine 5',5'''-P1,P4-tetraphosphate to yield ADP. The polypeptide is Bis(5'-nucleosyl)-tetraphosphatase, symmetrical (Ectopseudomonas mendocina (strain ymp) (Pseudomonas mendocina)).